The chain runs to 92 residues: Small ribosomal subunit protein uS19 (92 aa).

It belongs to the universal ribosomal protein uS19 family.

Its function is as follows. Protein S19 forms a complex with S13 that binds strongly to the 16S ribosomal RNA. This chain is Small ribosomal subunit protein uS19, found in Malacoplasma penetrans (strain HF-2) (Mycoplasma penetrans).